Here is a 185-residue protein sequence, read N- to C-terminus: Ribosome-recycling factor (185 aa).

It belongs to the RRF family.

It localises to the cytoplasm. In terms of biological role, responsible for the release of ribosomes from messenger RNA at the termination of protein biosynthesis. May increase the efficiency of translation by recycling ribosomes from one round of translation to another. The sequence is that of Ribosome-recycling factor from Shewanella sp. (strain ANA-3).